The chain runs to 556 residues: Formate--tetrahydrofolate ligase (556 aa).

65–72 (TPAGEGKS) is an ATP binding site.

This sequence belongs to the formate--tetrahydrofolate ligase family.

The enzyme catalyses (6S)-5,6,7,8-tetrahydrofolate + formate + ATP = (6R)-10-formyltetrahydrofolate + ADP + phosphate. It participates in one-carbon metabolism; tetrahydrofolate interconversion. In Enterococcus faecalis (strain ATCC 700802 / V583), this protein is Formate--tetrahydrofolate ligase.